The chain runs to 335 residues: Transcription factor IIIA (335 aa).

C2H2-type zinc fingers lie at residues 13–37, 43–67, 73–98, 105–129, 135–159, 162–188, 192–214, 221–246, and 252–276; these read YICS…LCKH, FPCT…SMTH, CKCD…QRAH, YECY…QYIH, FKCN…EKVH, YPCQ…AASH, TICD…KRTH, YKCP…LSFH, and FACG…ANTH. Over residues 269–280 the composition is skewed to basic and acidic residues; it reads LDRHANTHDPEK. Positions 269–335 are disordered; the sequence is LDRHANTHDP…ATAMQNLSIK (67 aa). The segment covering 281–292 has biased composition (basic residues); the sequence is KKMKKPRPKKSL.

It is found in the nucleus. In terms of biological role, involved in ribosomal large subunit biogenesis. Interacts with the internal control region (ICR) of approximately 50 bases within the 5S RNA genes, is required for correct transcription of these genes by RNA polymerase III. Also binds the transcribed 5S RNA's. This Lithobates pipiens (Northern leopard frog) protein is Transcription factor IIIA (gtf3a).